The sequence spans 635 residues: Factor of DNA methylation 2 (635 aa).

Positions leucine 289–lysine 471 form a coiled coil. The span at glutamate 350–alanine 365 shows a compositional bias: basic and acidic residues. Positions glutamate 350 to glutamate 376 are disordered.

In terms of assembly, forms a complex with IDN2 and FMD1/INDL1. As to expression, highly expressed in flowers and at lower levels in roots, leaves and stems.

Functionally, forms a complex with IDN2 and FDM1/IDNL1 that is required for RNA-directed DNA methylation (RdDM) and that functions at a downstream step of the RdDM pathway. The chain is Factor of DNA methylation 2 from Arabidopsis thaliana (Mouse-ear cress).